Reading from the N-terminus, the 327-residue chain is uncharacterized protein (327 aa).

In terms of domain architecture, S4 RNA-binding spans 12-84; that stretch reads MRIDRYLTQQ…IPITILYEDD (73 aa). The active site involves D137.

Belongs to the pseudouridine synthase RluA family.

The catalysed reaction is a uridine in RNA = a pseudouridine in RNA. This is an uncharacterized protein from Chlorobaculum parvum (strain DSM 263 / NCIMB 8327) (Chlorobium vibrioforme subsp. thiosulfatophilum).